The sequence spans 385 residues: GDSL esterase/lipase 5 (385 aa).

Residues 1 to 35 (MRESTLMEKVTRRTISSFIFFIVSSTILFLAGKSS) form the signal peptide. Asn45 carries N-linked (GlcNAc...) asparagine glycosylation. Ser55 serves as the catalytic Nucleophile. 4 N-linked (GlcNAc...) asparagine glycosylation sites follow: Asn66, Asn194, Asn211, and Asn289. Residues Asp345 and His348 contribute to the active site.

This sequence belongs to the 'GDSL' lipolytic enzyme family.

It is found in the secreted. The protein is GDSL esterase/lipase 5 (GLIP5) of Arabidopsis thaliana (Mouse-ear cress).